A 233-amino-acid chain; its full sequence is Antiholin-like protein LrgB (233 aa).

The next 6 membrane-spanning stretches (helical) occupy residues 5 to 25, 33 to 53, 63 to 83, 97 to 117, 152 to 172, and 212 to 232; these read LGIN…VIAT, GFFL…FLKL, IGGD…AIPL, IFGG…LVAI, LTSL…AKIV, and IAVV…APIL.

The protein belongs to the CidB/LrgB family. LrgB subfamily.

It localises to the cell membrane. Functionally, inhibits the expression or activity of extracellular murein hydrolases by interacting, possibly with LrgA, with the holin-like proteins CidA and/or CidB. The LrgAB and CidAB proteins may affect the proton motive force of the membrane. May be involved in programmed cell death (PCD), possibly triggering PCD in response to antibiotics and environmental stresses. This Staphylococcus epidermidis (strain ATCC 12228 / FDA PCI 1200) protein is Antiholin-like protein LrgB.